Reading from the N-terminus, the 337-residue chain is Probable cytosolic iron-sulfur protein assembly protein CIAO1 homolog (337 aa).

7 WD repeats span residues D15–M54, S65–V104, G109–V148, P154–Q193, C199–A238, N253–V292, and R301–I337.

This sequence belongs to the WD repeat CIA1 family.

Its function is as follows. Essential component of the cytosolic iron-sulfur (Fe/S) protein assembly machinery. Required for the maturation of extramitochondrial Fe/S proteins. The polypeptide is Probable cytosolic iron-sulfur protein assembly protein CIAO1 homolog (Caenorhabditis elegans).